Consider the following 248-residue polypeptide: DNA repair protein RecO (248 aa).

Belongs to the RecO family.

Functionally, involved in DNA repair and RecF pathway recombination. The sequence is that of DNA repair protein RecO from Chelativorans sp. (strain BNC1).